A 146-amino-acid polypeptide reads, in one-letter code: MNFLLSWVHWSLALLLYLHHAKWSQAAPMAEGGQKPHEVMKFMDVYQRSFCRPIETLVDIFQEYPDEIEFIFKPSCVPLMRCGGCCNDESLECVPTEEFNITMQIMRIKPHQSQHIGEMSFLQHNKCECRPKKDKARQEKCDKPRR.

Residues 1 to 26 (MNFLLSWVHWSLALLLYLHHAKWSQA) form the signal peptide. Cystine bridges form between cysteine 51–cysteine 93, cysteine 82–cysteine 127, and cysteine 86–cysteine 129. Asparagine 100 carries an N-linked (GlcNAc...) asparagine glycan.

It belongs to the PDGF/VEGF growth factor family. Homodimer; disulfide-linked. Also found as heterodimer with PGF. Interacts with NRP1. Interacts with isoform 2 of BSG. Interacts with CD82; this interaction inhibits VEGFA-mediated signaling pathway.

Growth factor active in angiogenesis, vasculogenesis and endothelial cell growth. Induces endothelial cell proliferation, promotes cell migration, inhibits apoptosis and induces permeabilization of blood vessels. Binds to the FLT1/VEGFR1 and KDR/VEGFR2 receptors, heparan sulfate and heparin. Binding to NRP1 receptor initiates a signaling pathway needed for motor neuron axon guidance and cell body migration, including for the caudal migration of facial motor neurons from rhombomere 4 to rhombomere 6 during embryonic development. Also binds the DEAR/FBXW7-AS1 receptor. The sequence is that of Vascular endothelial growth factor A (VEGFA) from Ovis aries (Sheep).